Reading from the N-terminus, the 103-residue chain is Large ribosomal subunit protein uL24 (103 aa).

The protein belongs to the universal ribosomal protein uL24 family. In terms of assembly, part of the 50S ribosomal subunit.

One of two assembly initiator proteins, it binds directly to the 5'-end of the 23S rRNA, where it nucleates assembly of the 50S subunit. In terms of biological role, one of the proteins that surrounds the polypeptide exit tunnel on the outside of the subunit. This chain is Large ribosomal subunit protein uL24, found in Dehalococcoides mccartyi (strain ATCC BAA-2266 / KCTC 15142 / 195) (Dehalococcoides ethenogenes (strain 195)).